A 429-amino-acid polypeptide reads, in one-letter code: GTPase Obg (429 aa).

Residues 1-158 (MFVDHVKIYV…LNVILELKVL (158 aa)) enclose the Obg domain. Residues 119 to 143 (AGRGGRGNSRFATPANPAPELSEKG) form a disordered region. Residues 159 to 329 (ADVGLVGFPS…LLFAIADLLE (171 aa)) form the OBG-type G domain. Residues 165 to 172 (GFPSVGKS), 190 to 194 (FTTIV), 212 to 215 (DLPG), 282 to 285 (NKMD), and 310 to 312 (SAV) each bind GTP. Mg(2+) contacts are provided by serine 172 and threonine 192. Positions 351-429 (KHEAKGEDFE…LQEFEFEFVD (79 aa)) constitute an OCT domain.

It belongs to the TRAFAC class OBG-HflX-like GTPase superfamily. OBG GTPase family. Monomer. Mg(2+) is required as a cofactor.

It localises to the cytoplasm. Its function is as follows. An essential GTPase which binds GTP, GDP and possibly (p)ppGpp with moderate affinity, with high nucleotide exchange rates and a fairly low GTP hydrolysis rate. Plays a role in control of the cell cycle, stress response, ribosome biogenesis and in those bacteria that undergo differentiation, in morphogenesis control. The polypeptide is GTPase Obg (Lysinibacillus sphaericus (strain C3-41)).